A 30-amino-acid chain; its full sequence is Chassatide C3 (30 aa).

The cyclopeptide (Gly-Asn) cross-link spans 1–30 (GIPCGESCVWIPCISSALGCSCKNKVCYRN). 3 disulfide bridges follow: cysteine 4-cysteine 20, cysteine 8-cysteine 22, and cysteine 13-cysteine 27.

This is a cyclic peptide. In terms of tissue distribution, expressed in fruit, pedicel, stem and root but not in leaf (at protein level).

Its function is as follows. Probably participates in a plant defense mechanism. The polypeptide is Chassatide C3 (Chassalia chartacea (Chassalia curviflora)).